The chain runs to 189 residues: Ras-like protein 1 (189 aa).

10-17 (GAGGVGKS) lines the GTP pocket. The Effector region motif lies at 32 to 40 (YDPTIEDSY). Residues 57 to 61 (DTAGQ) and 116 to 119 (NKCD) contribute to the GTP site. Cysteine 186 carries the cysteine methyl ester modification. The S-geranylgeranyl cysteine moiety is linked to residue cysteine 186. Positions 187-189 (KML) are cleaved as a propeptide — removed in mature form.

This sequence belongs to the small GTPase superfamily. Ras family.

It localises to the cell membrane. It carries out the reaction GTP + H2O = GDP + phosphate + H(+). Alternates between an inactive form bound to GDP and an active form bound to GTP. Activated by a guanine nucleotide-exchange factor (GEF) and inactivated by a GTPase-activating protein (GAP). Ras proteins bind GDP/GTP and possess intrinsic GTPase activity. Plays a role in eye development by regulating cell growth, survival of postmitotic ommatidial cells and differentiation of photoreceptor cells. During larval development, mediates Ptth/tor signaling leading to the production of ecdysone, a hormone required for the initiation of metamorphosis. This Drosophila willistoni (Fruit fly) protein is Ras-like protein 1.